The following is a 970-amino-acid chain: MLQFSLSPTLSMGFHVIAMVALLFSHVDHISAETEMEGEGNETGECTGSYYCKKGVILPIWEPQDPSFGDKIARATVYFVAMVYMFLGVSIIADRFMSSIEVITSQEKEITIKKPNGETTKTTVRIWNETVSNLTLMALGSSAPEILLSVIEVCGHNFTAGDLGPSTIVGSAAFNMFIIIALCVYVVPDGETRKIKHLRVFFVTAAWSIFAYTWLYIILSVSSPGVVEVWEGLLTFFFFPICVVFAWVADRRLLFYKYVYKRYRAGKQRGMIIEHEGDRPSSKTEIEMDGKVVNSHVDSFLDGALVLEVDERDQDDEEARREMARILKELKQKHPEKEIEQLIELANYQVLSQQQKSRAFYRIQATRLMTGAGNILKRHAADQARKAVSMHEVNTEVAENDPVSKIFFEQGTYQCLENCGTVALTIIRRGGDLTNTVFVDFRTEDGTANAGSDYEFTEGTVVFKPGETQKEIRVGIIDDDIFEEDENFLVHLSNVKVSLEASEDGILEASHVSTLACLGSPSTATVTIFDDDHAGIFTFEEPVTHVSESIGIMEVKVLRTSGARGNVIVPYKTIEGTARGGGEDFEDTCGELEFQNDEIVKTISVKVIDDEEYEKNKTFFLEIGEPRLVEMSEKKALLLNELGGFTITGKYLYGQPVFRKVHAREHPLPSTIITIADEYDDKQPLTSKEEEERRIAEMGRPILGEHTRLEVIIEESYEFKSTVDKLIKKTNLALVVGTNSWREQFIEAITVSAGEDDDDDECGEEKLPSCFDYVMHFLTVFWKVLFAFVPPTEYWNGWACFIVSILMIGLLTAFIGDLASHFACTIALKDSVTAVVFVALGTSVPDTFASKVAATQDQYADASIGNVTGSNAVNVFLGIGVAWSIAAIYHAANGEQFKVSPGTLAFSVTLFTIFAFINVGVLLYRRRPEIGGELGGPRTAKLLTSCLFVLLWLLYIFFSSLEAYCHIKGF.

Residues 1 to 32 (MLQFSLSPTLSMGFHVIAMVALLFSHVDHISA) form the signal peptide. Residues 33-71 (ETEMEGEGNETGECTGSYYCKKGVILPIWEPQDPSFGDK) lie on the Extracellular side of the membrane. An N-linked (GlcNAc...) asparagine glycan is attached at Asn-41. The chain crosses the membrane as a helical span at residues 72-92 (IARATVYFVAMVYMFLGVSII). The Cytoplasmic portion of the chain corresponds to 93–133 (ADRFMSSIEVITSQEKEITIKKPNGETTKTTVRIWNETVSN). Residues 134-154 (LTLMALGSSAPEILLSVIEVC) form a helical membrane-spanning segment. One copy of the Alpha-1 repeat lies at 138–178 (ALGSSAPEILLSVIEVCGHNFTAGDLGPSTIVGSAAFNMFI). Residues 155–167 (GHNFTAGDLGPST) lie on the Extracellular side of the membrane. Asn-157 carries N-linked (GlcNAc...) asparagine glycosylation. The chain crosses the membrane as a helical span at residues 168–188 (IVGSAAFNMFIIIALCVYVVP). The Cytoplasmic portion of the chain corresponds to 189 to 201 (DGETRKIKHLRVF). A helical membrane pass occupies residues 202–222 (FVTAAWSIFAYTWLYIILSVS). Over 223–228 (SPGVVE) the chain is Extracellular. The chain crosses the membrane as a helical span at residues 229-249 (VWEGLLTFFFFPICVVFAWVA). Residues 250–797 (DRRLLFYKYV…FVPPTEYWNG (548 aa)) are Cytoplasmic-facing. A putative calmodulin-binding region region spans residues 251 to 270 (RRLLFYKYVYKRYRAGKQRG). A phosphoserine mark is found at Ser-282 and Ser-389. 2 consecutive Calx-beta domains span residues 393–493 (VNTE…VHLS) and 524–624 (ATVT…LEIG). Ca(2+)-binding residues include Glu-417, Asp-453, Asp-478, Asp-479, Ile-481, Glu-483, Glu-486, Asp-530, Asp-531, Asp-532, Glu-548, Asp-584, Asp-610, Glu-611, Glu-612, and Glu-715. A helical membrane pass occupies residues 798–818 (WACFIVSILMIGLLTAFIGDL). The Extracellular portion of the chain corresponds to 819–821 (ASH). Residues 822–842 (FACTIALKDSVTAVVFVALGT) traverse the membrane as a helical segment. One copy of the Alpha-2 repeat lies at 839 to 875 (ALGTSVPDTFASKVAATQDQYADASIGNVTGSNAVNV). At 843–871 (SVPDTFASKVAATQDQYADASIGNVTGSN) the chain is on the cytoplasmic side. Residues 872 to 892 (AVNVFLGIGVAWSIAAIYHAA) form a helical membrane-spanning segment. The Extracellular segment spans residues 893–903 (NGEQFKVSPGT). Residues 904–924 (LAFSVTLFTIFAFINVGVLLY) form a helical membrane-spanning segment. Residues 925–941 (RRRPEIGGELGGPRTAK) are Cytoplasmic-facing. A helical transmembrane segment spans residues 942–962 (LLTSCLFVLLWLLYIFFSSLE). Residues 963-970 (AYCHIKGF) lie on the Extracellular side of the membrane.

Belongs to the Ca(2+):cation antiporter (CaCA) (TC 2.A.19) family. SLC8 subfamily.

It is found in the cell membrane. It carries out the reaction Ca(2+)(in) + 3 Na(+)(out) = Ca(2+)(out) + 3 Na(+)(in). With respect to regulation, activated by micromolar levels of Ca(2+). In terms of biological role, mediates the exchange of one Ca(2+) ion against three to four Na(+) ions across the cell membrane, and thereby contributes to the regulation of cytoplasmic Ca(2+) levels and Ca(2+)-dependent cellular processes. Contributes to Ca(2+) transport during excitation-contraction coupling in muscle. In a first phase, voltage-gated channels mediate the rapid increase of cytoplasmic Ca(2+) levels due to release of Ca(2+) stores from the endoplasmic reticulum. SLC8A1 mediates the export of Ca(2+) from the cell during the next phase, so that cytoplasmic Ca(2+) levels rapidly return to baseline. Required for normal embryonic heart development and the onset of heart contractions. This chain is Sodium/calcium exchanger 1 (SLC8A1), found in Bos taurus (Bovine).